Here is a 176-residue protein sequence, read N- to C-terminus: Large ribosomal subunit protein uL16 (176 aa).

The protein belongs to the universal ribosomal protein uL16 family.

The protein is Large ribosomal subunit protein uL16 of Thermoplasma volcanium (strain ATCC 51530 / DSM 4299 / JCM 9571 / NBRC 15438 / GSS1).